The chain runs to 158 residues: NAD(P)H-quinone oxidoreductase subunit J, chloroplastic (158 aa).

It belongs to the complex I 30 kDa subunit family. As to quaternary structure, NDH is composed of at least 16 different subunits, 5 of which are encoded in the nucleus.

The protein resides in the plastid. Its subcellular location is the chloroplast thylakoid membrane. It carries out the reaction a plastoquinone + NADH + (n+1) H(+)(in) = a plastoquinol + NAD(+) + n H(+)(out). The enzyme catalyses a plastoquinone + NADPH + (n+1) H(+)(in) = a plastoquinol + NADP(+) + n H(+)(out). In terms of biological role, NDH shuttles electrons from NAD(P)H:plastoquinone, via FMN and iron-sulfur (Fe-S) centers, to quinones in the photosynthetic chain and possibly in a chloroplast respiratory chain. The immediate electron acceptor for the enzyme in this species is believed to be plastoquinone. Couples the redox reaction to proton translocation, and thus conserves the redox energy in a proton gradient. This chain is NAD(P)H-quinone oxidoreductase subunit J, chloroplastic, found in Gossypium barbadense (Sea Island cotton).